The primary structure comprises 154 residues: Protein LOL1 (154 aa).

Putative zinc finger stretches follow at residues 34-64 (QLVC…VTAV), 73-103 (QLVC…VNLA), and 111-141 (HVNC…VTSV).

The protein localises to the nucleus. Positive regulator of reactive oxygen-induced cell death. May be involved in the repression of the copper/zinc superoxide dismutase CSD1 and CSD2 that detoxify accumulating superoxide before the reactive oxygen species (ROS) can trigger a cell death cascade. LSD1 and LOL1 have antagonistic effects on CSD1 and CSD2 accumulation to regulate oxidative stress-induced cell death. The polypeptide is Protein LOL1 (LOL1) (Arabidopsis thaliana (Mouse-ear cress)).